The primary structure comprises 342 residues: (+)-pulegone reductase (342 aa).

Residues 163 to 166, K189, Y205, N229, 251 to 257, 281 to 283, and N331 contribute to the NADP(+) site; these read GSVG, CGMVSQY, and FVV.

It belongs to the NADP-dependent oxidoreductase L4BD family.

Its subcellular location is the cytoplasm. It carries out the reaction (2R,5R)-isomenthone + NADP(+) = (R)-pulegone + NADPH + H(+). It catalyses the reaction (1R,4S)-menthone + NADP(+) = (R)-pulegone + NADPH + H(+). It functions in the pathway secondary metabolite biosynthesis; terpenoid biosynthesis. Its activity is regulated as follows. Not inhibited by (+)-menthofuran. Its function is as follows. Monoterpene synthase that catalyzes the specific reduction of the 4,8-double bond of (+)-pulegone to produce both (-)-menthone and (+)-isomenthone in a 70:30 ratio. Unable to utilize either (-)-isopiperitenone or (+)-cis-isopulegone, or to catalyze the reverse reaction with (-)-menthone or (+)-isomenthone. Has an absolute requirement for NADPH. The polypeptide is (+)-pulegone reductase (Mentha piperita (Peppermint)).